Consider the following 721-residue polypeptide: Polyribonucleotide nucleotidyltransferase (721 aa).

Mg(2+)-binding residues include Asp495 and Asp501. The KH domain occupies 562–621 (PRLLSFRIDPELIGTVIGPGGRTIKGITERTNTKIDIEDGGIVTIASHDGAAAEAAQRII). The S1 motif domain maps to 631–699 (GEVFSGTITR…NRGRINLTLR (69 aa)). The tract at residues 700-721 (GVPQNGEETQSEPAPTPVAPLN) is disordered.

The protein belongs to the polyribonucleotide nucleotidyltransferase family. It depends on Mg(2+) as a cofactor.

The protein localises to the cytoplasm. It catalyses the reaction RNA(n+1) + phosphate = RNA(n) + a ribonucleoside 5'-diphosphate. In terms of biological role, involved in mRNA degradation. Catalyzes the phosphorolysis of single-stranded polyribonucleotides processively in the 3'- to 5'-direction. This is Polyribonucleotide nucleotidyltransferase from Prochlorococcus marinus (strain MIT 9303).